Reading from the N-terminus, the 92-residue chain is Small ribosomal subunit protein uS19c (92 aa).

Belongs to the universal ribosomal protein uS19 family.

The protein localises to the plastid. It localises to the chloroplast. Protein S19 forms a complex with S13 that binds strongly to the 16S ribosomal RNA. The protein is Small ribosomal subunit protein uS19c of Illicium oligandrum (Star anise).